The sequence spans 352 residues: Rhodopsin (352 aa).

Residues Met1–Ala36 are Extracellular-facing. Residues Asn2 and Asn15 are each glycosylated (N-linked (GlcNAc...) asparagine). A helical transmembrane segment spans residues Tyr37 to Val61. Topologically, residues Thr62–Asn73 are cytoplasmic. The chain crosses the membrane as a helical span at residues Tyr74–Tyr96. Over Thr97–Cys110 the chain is Extracellular. Cysteines 110 and 187 form a disulfide. Residues Asn111–Ile133 form a helical membrane-spanning segment. Positions Glu134 to Trp136 match the 'Ionic lock' involved in activated form stabilization motif. Over Glu134 to His152 the chain is Cytoplasmic. The helical transmembrane segment at Ala153–Val173 threads the bilayer. Residues Gly174–Ser202 are Extracellular-facing. A helical membrane pass occupies residues Phe203–Gly224. The Cytoplasmic segment spans residues Arg225 to Arg252. A helical membrane pass occupies residues Met253–Trp274. The Extracellular portion of the chain corresponds to Ile275 to Ile286. A helical membrane pass occupies residues Phe287 to Cys308. Lys296 bears the N6-(retinylidene)lysine mark. Over Leu309–Ala352 the chain is Cytoplasmic. 2 S-palmitoyl cysteine lipidation sites follow: Cys322 and Cys323. Residues Glu331 to Ala352 are disordered. Residues Ala334–Ala352 show a composition bias toward low complexity.

Belongs to the G-protein coupled receptor 1 family. Opsin subfamily. Phosphorylated on some or all of the serine and threonine residues present in the C-terminal region. Post-translationally, contains one covalently linked retinal chromophore.

It is found in the membrane. Its subcellular location is the cell projection. It localises to the cilium. The protein resides in the photoreceptor outer segment. Its function is as follows. Photoreceptor required for image-forming vision at low light intensity. While most salt water fish species use retinal as chromophore, most freshwater fish use 3-dehydroretinal, or a mixture of retinal and 3-dehydroretinal. Light-induced isomerization of 11-cis to all-trans retinal triggers a conformational change that activates signaling via G-proteins. Subsequent receptor phosphorylation mediates displacement of the bound G-protein alpha subunit by arrestin and terminates signaling. The polypeptide is Rhodopsin (rho) (Psalidodon fasciatus (Banded astyanax)).